The chain runs to 142 residues: FAD synthase (142 aa).

ATP-binding positions include 9–10, 14–17, Asp-92, and Tyr-119; these read TF and HPGH.

The protein belongs to the archaeal FAD synthase family. Homodimer. The cofactor is a divalent metal cation.

The catalysed reaction is FMN + ATP + H(+) = FAD + diphosphate. It participates in cofactor biosynthesis; FAD biosynthesis; FAD from FMN: step 1/1. In terms of biological role, catalyzes the transfer of the AMP portion of ATP to flavin mononucleotide (FMN) to produce flavin adenine dinucleotide (FAD) coenzyme. This is FAD synthase from Halorhabdus utahensis (strain DSM 12940 / JCM 11049 / AX-2).